A 396-amino-acid polypeptide reads, in one-letter code: Elongation factor Tu (396 aa).

Residues 10–206 enclose the tr-type G domain; sequence KPHVNIGTIG…AVDSYIPEPV (197 aa). Residues 19–26 form a G1 region; it reads GHVDHGKT. 19–26 lines the GTP pocket; sequence GHVDHGKT. Residue T26 participates in Mg(2+) binding. The interval 60–64 is G2; the sequence is GITIA. The interval 81-84 is G3; the sequence is DCPG. Residues 81–85 and 136–139 contribute to the GTP site; these read DCPGH and NKAD. The interval 136-139 is G4; sequence NKAD. The interval 174 to 176 is G5; it reads SAL.

The protein belongs to the TRAFAC class translation factor GTPase superfamily. Classic translation factor GTPase family. EF-Tu/EF-1A subfamily. In terms of assembly, monomer.

It is found in the cytoplasm. It carries out the reaction GTP + H2O = GDP + phosphate + H(+). In terms of biological role, GTP hydrolase that promotes the GTP-dependent binding of aminoacyl-tRNA to the A-site of ribosomes during protein biosynthesis. This is Elongation factor Tu from Geotalea uraniireducens (strain Rf4) (Geobacter uraniireducens).